A 201-amino-acid polypeptide reads, in one-letter code: GTP cyclohydrolase 1 (201 aa).

Zn(2+) is bound by residues Cys-90, His-93, and Cys-163.

Belongs to the GTP cyclohydrolase I family. As to quaternary structure, toroid-shaped homodecamer, composed of two pentamers of five dimers.

The enzyme catalyses GTP + H2O = 7,8-dihydroneopterin 3'-triphosphate + formate + H(+). It functions in the pathway cofactor biosynthesis; 7,8-dihydroneopterin triphosphate biosynthesis; 7,8-dihydroneopterin triphosphate from GTP: step 1/1. This chain is GTP cyclohydrolase 1, found in Streptomyces avermitilis (strain ATCC 31267 / DSM 46492 / JCM 5070 / NBRC 14893 / NCIMB 12804 / NRRL 8165 / MA-4680).